Reading from the N-terminus, the 708-residue chain is Lactotransferrin (708 aa).

Residues methionine 1–alanine 19 form the signal peptide. Transferrin-like domains follow at residues valine 25 to glutamate 352 and valine 364 to lysine 693. 2 disulfides stabilise this stretch: cysteine 28–cysteine 64 and cysteine 38–cysteine 55. Position 79 (aspartate 79) interacts with Fe cation. Lysine 92 is a catalytic residue. Tyrosine 111 provides a ligand contact to Fe cation. 5 disulfide bridges follow: cysteine 134–cysteine 217, cysteine 176–cysteine 192, cysteine 179–cysteine 202, cysteine 189–cysteine 200, and cysteine 250–cysteine 264. 4 residues coordinate hydrogencarbonate: threonine 136, arginine 140, alanine 142, and glycine 143. Tyrosine 211 provides a ligand contact to Fe cation. Asparagine 252 carries an N-linked (GlcNAc...) (high mannose) asparagine glycan. Histidine 272 lines the Fe cation pocket. Serine 278 acts as the Nucleophile in catalysis. An N-linked (GlcNAc...) (hybrid) asparagine glycan is attached at asparagine 300. Cystine bridges form between cysteine 367–cysteine 399 and cysteine 377–cysteine 390. Aspartate 414 and tyrosine 452 together coordinate Fe cation. Disulfide bonds link cysteine 424-cysteine 703, cysteine 444-cysteine 666, cysteine 476-cysteine 551, cysteine 500-cysteine 694, cysteine 510-cysteine 524, cysteine 521-cysteine 534, cysteine 592-cysteine 606, and cysteine 644-cysteine 649. Hydrogencarbonate-binding residues include threonine 478, arginine 482, alanine 484, and glycine 485. An N-linked (GlcNAc...) (complex) asparagine; alternate glycan is attached at asparagine 495. A glycan (N-linked (GlcNAc...) (high mannose) asparagine; alternate) is linked at asparagine 495. N-linked (GlcNAc...) (hybrid) asparagine; alternate glycosylation is present at asparagine 495. Tyrosine 545 is a Fe cation binding site. Asparagine 564 carries an N-linked (GlcNAc...) (high mannose) asparagine glycan. Residue histidine 614 coordinates Fe cation.

Belongs to the transferrin family. Monomer. Found in a complex with LTF, CLU, EPPIN and SEMG1. Found in a complex with MPO and LTF; interacts directly with CP, allows Fe(3+) incorporation into LTF and activation of CP ferroxidase activity. Post-translationally, poly-N-acetyllactosaminic carbohydrate moiety seems to be needed for TLR4 activation.

It is found in the secreted. The protein resides in the cytoplasmic granule. Functionally, transferrins are iron binding transport proteins which can bind two Fe(3+) ions in association with the binding of an anion, usually bicarbonate. In terms of biological role, major iron-binding and multifunctional protein found in exocrine fluids such as breast milk and mucosal secretions. Has antimicrobial activity, which depends on the extracellular cation concentration. Antimicrobial properties include bacteriostasis, which is related to its ability to sequester free iron and thus inhibit microbial growth, as well as direct bactericidal properties leading to the release of lipopolysaccharides from the bacterial outer membrane. Can also prevent bacterial biofilm development in P.aeruginosa infection. Has weak antifungal activity against C.albicans. Has anabolic, differentiating and anti-apoptotic effects on osteoblasts and can also inhibit osteoclastogenesis, possibly playing a role in the regulation of bone growth. Promotes binding of species C adenoviruses to epithelial cells, promoting adenovirus infection. Can inhibit papillomavirus infections. Stimulates the TLR4 signaling pathway leading to NF-kappa-B activation and subsequent pro-inflammatory cytokine production while also interfering with the lipopolysaccharide (LPS)-stimulated TLR4 signaling. Inhibits neutrophil granulocyte migration to sites of apoptosis, when secreted by apoptotic cells. Stimulates VEGFA-mediated endothelial cell migration and proliferation. Binds heparin, chondroitin sulfate and possibly other glycosaminoglycans (GAGs). Also binds specifically to pneumococcal surface protein A (PspA), the lipid A portion of bacterial lipopolysaccharide (LPS), lysozyme and DNA. Lactoferricin binds to the bacterial surface and is crucial for the bactericidal functions. Has some antiviral activity against papillomavirus infection. N-terminal region shows strong antifungal activity against C.albicans. Contains two BBXB heparin-binding consensus sequences that appear to form the predominate functional GAG-binding site. Its function is as follows. The lactotransferrin transferrin-like domain 1 functions as a serine protease of the peptidase S60 family that cuts arginine rich regions. This function contributes to the antimicrobial activity. Shows a preferential cleavage at -Arg-Ser-Arg-Arg-|- and -Arg-Arg-Ser-Arg-|-, and of Z-Phe-Arg-|-aminomethylcoumarin sites. The chain is Lactotransferrin (LTF) from Bubalus bubalis (Domestic water buffalo).